The sequence spans 467 residues: ATP synthase subunit beta (467 aa).

Residue 156 to 163 (GGAGVGKT) participates in ATP binding.

The protein belongs to the ATPase alpha/beta chains family. F-type ATPases have 2 components, CF(1) - the catalytic core - and CF(0) - the membrane proton channel. CF(1) has five subunits: alpha(3), beta(3), gamma(1), delta(1), epsilon(1). CF(0) has three main subunits: a(1), b(2) and c(9-12). The alpha and beta chains form an alternating ring which encloses part of the gamma chain. CF(1) is attached to CF(0) by a central stalk formed by the gamma and epsilon chains, while a peripheral stalk is formed by the delta and b chains.

It localises to the cell inner membrane. The enzyme catalyses ATP + H2O + 4 H(+)(in) = ADP + phosphate + 5 H(+)(out). Functionally, produces ATP from ADP in the presence of a proton gradient across the membrane. The catalytic sites are hosted primarily by the beta subunits. In Cupriavidus necator (strain ATCC 17699 / DSM 428 / KCTC 22496 / NCIMB 10442 / H16 / Stanier 337) (Ralstonia eutropha), this protein is ATP synthase subunit beta.